We begin with the raw amino-acid sequence, 122 residues long: MKKEEIIQAIKEMTVLELNELVEACEEEFGVSAAAPVAVAGAGAAAAGAAEEKTEFDVVLADAGSEKIKVIKAVREVTGLGLKEAKALVDGAPKTLKEAASKEDGEAIKAKLEEVGAKVELK.

This sequence belongs to the bacterial ribosomal protein bL12 family. In terms of assembly, homodimer. Part of the ribosomal stalk of the 50S ribosomal subunit. Forms a multimeric L10(L12)X complex, where L10 forms an elongated spine to which 2 to 4 L12 dimers bind in a sequential fashion. Binds GTP-bound translation factors.

In terms of biological role, forms part of the ribosomal stalk which helps the ribosome interact with GTP-bound translation factors. Is thus essential for accurate translation. The sequence is that of Large ribosomal subunit protein bL12 from Clostridium botulinum (strain 657 / Type Ba4).